The chain runs to 463 residues: MTPVRMQHSLAGQTYAVPLIQPDLRREEAVQQMADALQYLQKVSGDIFSRISQQVEQSRSQVQAIGEKVSLAQAKIEKIKGSKKAIKVFSSAKYPAPERLQEYGSIFTGAQDPGLQRRPRHRIQSKHRPLDERALQEKDFPVCVSTKPEPEDDAEEGLGGLPSNISSVSSLLLFNTTENLGKKYVFLDPLAGAVTKTHVMLGAETEEKLFDAPLSISKREQLEQQVPENYFYVPDLGQVPEIDVPSYLPDLPGITNDLMYIADLGPGIAPSAPGTIPELPTFHTEVAEPLKVDLQDGVLTPPPPPPPPPPAPEVLASAPPLPPSTAAPVGQGARQDDSSSSASPSVQGAPREVVDPSGGRATLLESIRQAGGIGKAKLRSMKERKLEKKQQKEQEQVRATSQGGHLMSDLFNKLVMRRKGISGKGPGAGEGPGGAFARVSDSIPPLPPPQQPQAEEDEDDWES.

A required for WASH complex assembly region spans residues 1–54 (MTPVRMQHSLAGQTYAVPLIQPDLRREEAVQQMADALQYLQKVSGDIFSRISQQ). The WHD1 stretch occupies residues 1–165 (MTPVRMQHSL…EGLGGLPSNI (165 aa)). Lys218 is covalently cross-linked (Glycyl lysine isopeptide (Lys-Gly) (interchain with G-Cter in ubiquitin)). The interval 295-463 (QDGVLTPPPP…AEEDEDDWES (169 aa)) is disordered. The segment covering 300-312 (TPPPPPPPPPPAP) has biased composition (pro residues). The interval 347-463 (QGAPREVVDP…AEEDEDDWES (117 aa)) is VCA. Residues 359–381 (GRATLLESIRQAGGIGKAKLRSM) enclose the WH2 domain. A compositionally biased stretch (basic and acidic residues) spans 380–396 (SMKERKLEKKQQKEQEQ). Over residues 422–434 (SGKGPGAGEGPGG) the composition is skewed to gly residues. Over residues 454–463 (AEEDEDDWES) the composition is skewed to acidic residues.

This sequence belongs to the WASH1 family. As to quaternary structure, component of the WASH core complex also described as WASH regulatory complex (SHRC) composed of WASH (WASHC1, WASH2P or WASH3P), WASHC2 (WASHC2A or WASHC2C), WASHC3, WASHC4 and WASHC5. The WASH core complex associates with the F-actin-capping protein dimer (formed by CAPZA1, CAPZA2 or CAPZA3 and CAPZB) in a transient or substoichiometric manner which was initially described as WASH complex. Interacts (via WHD1 region) with WASHC2C; the interaction is direct. Interacts with alpha-tubulin. Interacts with BECN1; WASHC1 and AMBRA1 can competitively interact with BECN1. Interacts with BLOC1S2; may associate with the BLOC-1 complex. Interacts with tubulin gamma chain (TUBG1 or TUBG2). Interacts with EXOC1, EXOC4, EXOC8; in MMP14-positive endosomes in breast tumor cells; indicative for an association with the exocyst complex.

It localises to the early endosome. Its subcellular location is the early endosome membrane. The protein localises to the recycling endosome membrane. It is found in the cell projection. The protein resides in the lamellipodium. It localises to the filopodium. Its subcellular location is the cytoplasmic vesicle. The protein localises to the autophagosome. It is found in the cytoplasm. The protein resides in the cytoskeleton. It localises to the microtubule organizing center. Its subcellular location is the centrosome. The protein localises to the centriole. Functionally, acts as a nucleation-promoting factor at the surface of endosomes, where it recruits and activates the Arp2/3 complex to induce actin polymerization, playing a key role in the fission of tubules that serve as transport intermediates during endosome sorting. Involved in endocytic trafficking of EGF. Involved in transferrin receptor recycling. Regulates the trafficking of endosomal alpha5beta1 integrin to the plasma membrane and involved in invasive cell migration. In T-cells involved in endosome-to-membrane recycling of receptors including T-cell receptor (TCR), CD28 and ITGAL; proposed to be implicated in T cell proliferation and effector function. In dendritic cells involved in endosome-to-membrane recycling of major histocompatibility complex (MHC) class II probably involving retromer and subsequently allowing antigen sampling, loading and presentation during T-cell activation. Involved in Arp2/3 complex-dependent actin assembly driving Salmonella typhimurium invasion independent of ruffling. Involved in the exocytosis of MMP14 leading to matrix remodeling during invasive migration and implicating late endosome-to-plasma membrane tubular connections and cooperation with the exocyst complex. Involved in negative regulation of autophagy independently from its role in endosomal sorting by inhibiting BECN1 ubiquitination to inactivate PIK3C3/Vps34 activity. This chain is Putative WAS protein family homolog 3 (WASH3P), found in Homo sapiens (Human).